The following is a 342-amino-acid chain: Prenyl transferase ptmC (342 aa).

The chain crosses the membrane as a helical span at residues 17–37 (LSFLTLTVGALALIVVLYISI). Isopentenyl diphosphate is bound at residue H110. Residues D117 and D121 each coordinate Mg(2+). Position 126 (R126) interacts with dimethylallyl diphosphate. The N-linked (GlcNAc...) asparagine glycan is linked to N154. Dimethylallyl diphosphate-binding residues include K210, T211, Q240, N247, and K257.

The protein belongs to the FPP/GGPP synthase family.

The protein resides in the membrane. Its pathway is secondary metabolite biosynthesis. Its function is as follows. Prenyl transferase; part of the gene cluster that mediates the biosynthesis of the indole diterpenes penitrems. The geranylgeranyl diphosphate (GGPP) synthase ptmG catalyzes the first step in penitrem biosynthesis via conversion of farnesyl pyrophosphate and isopentyl pyrophosphate into geranylgeranyl pyrophosphate (GGPP). Condensation of indole-3-glycerol phosphate with GGPP by the prenyl transferase ptmC then forms 3-geranylgeranylindole (3-GGI). Epoxidation by the FAD-dependent monooxygenase ptmM leads to a epoxidized-GGI that is substrate of the terpene cyclase ptmB for cyclization to yield paspaline. Paspaline is subsequently converted to 13-desoxypaxilline by the cytochrome P450 monooxygenase ptmP, the latter being then converted to paxilline by the cytochrome P450 monooxygenase ptmQ. Paxilline is converted to beta-paxitriol via C-10 ketoreduction by the short-chain dehydrogenase ptmH which can be monoprenylated at the C-20 by the indole diterpene prenyltransferase ptmD. A two-step elimination (acetylation and elimination) process performed by the O-acetyltransferase ptmV and ptmI leads to the production of the prenylated form of penijanthine. The FAD-linked oxidoreductase ptmO then converts the prenylated form of penijanthine into PC-M5 which is in turn transformed into PC-M4 by the aromatic dimethylallyltransferase ptmE. Five sequential oxidative transformations performed by the cytochrome P450 monooxygenases ptmK, ptmU, ptmL, ptmN and ptmJ yield the various penitrem compounds. PtmK, ptmU and ptmM are involved in the formation of the key bicyclic ring of penitrem C via the formation of the intermediates secopenitrem D and penitrem D. PtmL catalyzes the epoxidation of penitrem D and C to yield penitrem B and F, respectively. PtmJ catalyzes the last benzylic hydroxylation to convert penitrem B to prenitrem E and penitrem F to penitrem A. The chain is Prenyl transferase ptmC from Penicillium ochrochloron.